A 455-amino-acid polypeptide reads, in one-letter code: tRNA modification GTPase MnmE (455 aa).

Residues lysine 29, glutamate 91, and arginine 131 each coordinate (6S)-5-formyl-5,6,7,8-tetrahydrofolate. Residues 226–378 (GLKVALVGLP…LIQELLKLAG (153 aa)) enclose the TrmE-type G domain. Position 236 (asparagine 236) interacts with K(+). Residues 236-241 (NVGKSS), 255-261 (TDLPGTT), 280-283 (DTAG), and 341-344 (NKAD) contribute to the GTP site. Position 240 (serine 240) interacts with Mg(2+). Positions 255, 257, and 260 each coordinate K(+). Threonine 261 provides a ligand contact to Mg(2+). Lysine 455 contributes to the (6S)-5-formyl-5,6,7,8-tetrahydrofolate binding site.

This sequence belongs to the TRAFAC class TrmE-Era-EngA-EngB-Septin-like GTPase superfamily. TrmE GTPase family. As to quaternary structure, homodimer. Heterotetramer of two MnmE and two MnmG subunits. K(+) serves as cofactor.

It localises to the cytoplasm. Exhibits a very high intrinsic GTPase hydrolysis rate. Involved in the addition of a carboxymethylaminomethyl (cmnm) group at the wobble position (U34) of certain tRNAs, forming tRNA-cmnm(5)s(2)U34. This chain is tRNA modification GTPase MnmE, found in Prochlorococcus marinus (strain SARG / CCMP1375 / SS120).